The chain runs to 210 residues: tRNA (guanine-N(7)-)-methyltransferase (210 aa).

4 residues coordinate S-adenosyl-L-methionine: Glu43, Glu68, Asp95, and Asp117. Asp117 is an active-site residue. Substrate-binding positions include Lys121, Asp153, and 190 to 193 (TEYE).

The protein belongs to the class I-like SAM-binding methyltransferase superfamily. TrmB family.

It catalyses the reaction guanosine(46) in tRNA + S-adenosyl-L-methionine = N(7)-methylguanosine(46) in tRNA + S-adenosyl-L-homocysteine. It functions in the pathway tRNA modification; N(7)-methylguanine-tRNA biosynthesis. Functionally, catalyzes the formation of N(7)-methylguanine at position 46 (m7G46) in tRNA. In Macrococcus caseolyticus (strain JCSC5402) (Macrococcoides caseolyticum), this protein is tRNA (guanine-N(7)-)-methyltransferase.